We begin with the raw amino-acid sequence, 170 residues long: MLRQLLVLVGLAVVCLADEHEHCCSEEDHRIVQKQWDILWRDTESSKIKIGFGRLLLTKLAKDIPDVNDLFKRVDIEHAEGPKFSAHALRILNGLDLAINLLDDPPALDAALDHLAHQHEVREGVQKAHFKKFGEILATGLPQVLDDYDALAWKSCLKGILTKISSRLNA.

The signal sequence occupies residues Met-1–Ala-17. Residues Cys-23–Asn-169 enclose the Globin domain. The cysteines at positions 24 and 156 are disulfide-linked. His-119 is a binding site for heme b.

It belongs to the globin family. As to quaternary structure, the extracellular hemoglobin of the earthworm consists of 12 subunits that have a hexagonal bilayer structure with a molecular weight near 3.8 million. Each one-twelfth subunit is composed primarily of disulfide linked trimers (chains A, B, and C) and monomers (chain D).

It localises to the secreted. The sequence is that of Extracellular globin-3 from Lumbricus terrestris (Common earthworm).